A 313-amino-acid chain; its full sequence is Hydroxyphenylpyruvate reductase (313 aa).

NADP(+) contacts are provided by residues 152–155 (LGRI), 174–176 (SRS), and I230. R232 is a catalytic residue. Position 256 (D256) interacts with NADP(+). Residue E261 is part of the active site. H279 functions as the Proton donor in the catalytic mechanism.

The protein belongs to the D-isomer specific 2-hydroxyacid dehydrogenase family.

The enzyme catalyses (2R)-2-hydroxy-3-(4-hydroxyphenyl)propanoate + NAD(+) = 3-(4-hydroxyphenyl)pyruvate + NADH + H(+). It carries out the reaction (2R)-2-hydroxy-3-(4-hydroxyphenyl)propanoate + NADP(+) = 3-(4-hydroxyphenyl)pyruvate + NADPH + H(+). The catalysed reaction is (2R)-3-(3,4-dihydroxyphenyl)lactate + NADP(+) = 3-(3,4-dihydroxyphenyl)pyruvate + NADPH + H(+). It catalyses the reaction (2R)-3-(3,4-dihydroxyphenyl)lactate + NAD(+) = 3-(3,4-dihydroxyphenyl)pyruvate + NADH + H(+). In terms of biological role, catalyzes the NAD(P)H-dependent reduction of 4-hydroxyphenylpyruvate to 4-hydroxyphenyllactate and 3,4-dihydroxyphenylpyruvate to 3,4-dihydroxyphenyllactate in the biosynthesis of rosmarinic acid. Rosmarinic acid is an ester of caffeic acid and 3,4-dihydroxyphenyllactic acid. NADP is the preferred substrate. This Plectranthus scutellarioides (Coleus) protein is Hydroxyphenylpyruvate reductase (HPPR).